The sequence spans 786 residues: Endonuclease MutS2 (786 aa).

Residue 335 to 342 (GPNTGGKT) coordinates ATP. Residues 711 to 786 (LDLRGERFEN…GLGVTVVELK (76 aa)) form the Smr domain.

It belongs to the DNA mismatch repair MutS family. MutS2 subfamily. As to quaternary structure, homodimer. Binds to stalled ribosomes, contacting rRNA.

In terms of biological role, endonuclease that is involved in the suppression of homologous recombination and thus may have a key role in the control of bacterial genetic diversity. Acts as a ribosome collision sensor, splitting the ribosome into its 2 subunits. Detects stalled/collided 70S ribosomes which it binds and splits by an ATP-hydrolysis driven conformational change. Acts upstream of the ribosome quality control system (RQC), a ribosome-associated complex that mediates the extraction of incompletely synthesized nascent chains from stalled ribosomes and their subsequent degradation. Probably generates substrates for RQC. The sequence is that of Endonuclease MutS2 from Bacillus cytotoxicus (strain DSM 22905 / CIP 110041 / 391-98 / NVH 391-98).